Reading from the N-terminus, the 474-residue chain is Hepatocyte nuclear factor 4-alpha (474 aa).

Residues 57 to 132 (SALCAICGDR…AGMKKEAVQN (76 aa)) constitute a DNA-binding region (nuclear receptor). NR C4-type zinc fingers lie at residues 60-80 (CAICGDRATGKHYGASSCDGC) and 96-120 (CRFSRQCVVDKDKRNQCRYCRLKKC). Phosphoserine; by PKA is present on residues S142 and S143. Position 144 is a phosphotyrosine (Y144). Residues 147 to 377 (SSLPSINALL…NLLQEMLLGG (231 aa)) form the NR LBD domain. T166 carries the phosphothreonine modification. S167 bears the Phosphoserine mark. Residues K234 and K307 each participate in a glycyl lysine isopeptide (Lys-Gly) (interchain with G-Cter in ubiquitin) cross-link. Position 313 is a phosphoserine; by AMPK (S313). Residues 368–376 (NLLQEMLLG) carry the 9aaTAD motif. A disordered region spans residues 413-450 (SNGQMCEWPRPRGQAATPETPQPSPPSGSGSESYKLLP). Phosphothreonine is present on residues T429 and T432. S436 is modified (phosphoserine). Residue K458 is modified to N6-acetyllysine.

Belongs to the nuclear hormone receptor family. NR2 subfamily. In terms of assembly, homodimerization is required for HNF4-alpha to bind to its recognition site. Interacts with CLOCK, BMAL1, CRY1, CRY2, PER1 and PER2. Interacts with NR0B2/SHP; the resulting heterodimer is transcriptionally inactive. Interacts with DDX3X; this interaction disrupts the interaction between HNF4 and NR0B2 that forms inactive heterodimers and enhances the formation of active HNF4 homodimers. Phosphorylation at Ser-313 by AMPK reduces the ability to form homodimers and bind DNA. Phosphorylated in the recognition sequence R-R-S-S near the DNA-binding domain; phosphorylation results in decrease in DNA-binding activity. Phosphorylation of HNF4 depends on the diet and is decreased by a carbohydrate-rich diet and is increased by fasting. Post-translationally, the N-terminus is blocked. In terms of processing, acetylation at Lys-458 lowers transcriptional activation by about two-fold. Liver, kidney and intestine.

The protein resides in the nucleus. Its function is as follows. Transcriptional regulator which controls the expression of hepatic genes during the transition of endodermal cells to hepatic progenitor cells, facilitating the recruitment of RNA pol II to the promoters of target genes. Activates the transcription of CYP2C38. Represses the CLOCK-BMAL1 transcriptional activity and is essential for circadian rhythm maintenance and period regulation in the liver and colon cells. The chain is Hepatocyte nuclear factor 4-alpha (Hnf4a) from Rattus norvegicus (Rat).